A 218-amino-acid chain; its full sequence is NADH-ubiquinone oxidoreductase 21 kDa subunit, mitochondrial (218 aa).

The N-terminal 33 residues, 1–33, are a transit peptide targeting the mitochondrion; sequence MSALRITTASAARMLRTSNAMMPSVMGAAQRRA. The disordered stretch occupies residues 31-74; the sequence is RRALSDSAEPARVPSVESARVPEKLAKEDSPLATPKRNSPDYNV. Basic and acidic residues predominate over residues 50-60; sequence RVPEKLAKEDS.

The protein belongs to the complex I NDUFS4 subunit family. Complex I is composed of about 40 different subunits. This is a component of the iron-sulfur (IP) fragment of the enzyme.

It is found in the mitochondrion inner membrane. Accessory subunit of the mitochondrial membrane respiratory chain NADH dehydrogenase (Complex I), that is believed not to be involved in catalysis. Complex I functions in the transfer of electrons from NADH to the respiratory chain. The immediate electron acceptor for the enzyme is believed to be ubiquinone. The polypeptide is NADH-ubiquinone oxidoreductase 21 kDa subunit, mitochondrial (nuo-21) (Neurospora crassa (strain ATCC 24698 / 74-OR23-1A / CBS 708.71 / DSM 1257 / FGSC 987)).